We begin with the raw amino-acid sequence, 153 residues long: 3-hydroxyacyl-[acyl-carrier-protein] dehydratase FabZ (153 aa).

The active site involves His56.

This sequence belongs to the thioester dehydratase family. FabZ subfamily.

It is found in the cytoplasm. It catalyses the reaction a (3R)-hydroxyacyl-[ACP] = a (2E)-enoyl-[ACP] + H2O. Functionally, involved in unsaturated fatty acids biosynthesis. Catalyzes the dehydration of short chain beta-hydroxyacyl-ACPs and long chain saturated and unsaturated beta-hydroxyacyl-ACPs. The sequence is that of 3-hydroxyacyl-[acyl-carrier-protein] dehydratase FabZ from Nitrosomonas europaea (strain ATCC 19718 / CIP 103999 / KCTC 2705 / NBRC 14298).